The following is a 226-amino-acid chain: Ribonuclease 3 (226 aa).

The RNase III domain maps to 6–128 (INKLQRKLGY…LIGGVFLDSD (123 aa)). Position 41 (Glu41) interacts with Mg(2+). Residue Asp45 is part of the active site. Residues Asp114 and Glu117 each coordinate Mg(2+). Residue Glu117 is part of the active site. Positions 155 to 225 (DPKTRLQEFL…AEQALIKLGI (71 aa)) constitute a DRBM domain.

The protein belongs to the ribonuclease III family. As to quaternary structure, homodimer. Requires Mg(2+) as cofactor.

The protein resides in the cytoplasm. It carries out the reaction Endonucleolytic cleavage to 5'-phosphomonoester.. Functionally, digests double-stranded RNA. Involved in the processing of primary rRNA transcript to yield the immediate precursors to the large and small rRNAs (23S and 16S). Processes some mRNAs, and tRNAs when they are encoded in the rRNA operon. Processes pre-crRNA and tracrRNA of type II CRISPR loci if present in the organism. This chain is Ribonuclease 3, found in Erwinia tasmaniensis (strain DSM 17950 / CFBP 7177 / CIP 109463 / NCPPB 4357 / Et1/99).